We begin with the raw amino-acid sequence, 325 residues long: Lipoyl synthase (325 aa).

The disordered stretch occupies residues 1–31; that stretch reads MASDSDLLDTKPAETRHPEKAHRPDQPTLRK. Positions 8 to 31 are enriched in basic and acidic residues; it reads LDTKPAETRHPEKAHRPDQPTLRK. The [4Fe-4S] cluster site is built by C61, C66, C72, C87, C91, C94, and S300. The region spanning 73–289 is the Radical SAM core domain; that stretch reads WAKKHATFMI…AEIGRAKGFL (217 aa).

Belongs to the radical SAM superfamily. Lipoyl synthase family. [4Fe-4S] cluster is required as a cofactor.

Its subcellular location is the cytoplasm. The enzyme catalyses [[Fe-S] cluster scaffold protein carrying a second [4Fe-4S](2+) cluster] + N(6)-octanoyl-L-lysyl-[protein] + 2 oxidized [2Fe-2S]-[ferredoxin] + 2 S-adenosyl-L-methionine + 4 H(+) = [[Fe-S] cluster scaffold protein] + N(6)-[(R)-dihydrolipoyl]-L-lysyl-[protein] + 4 Fe(3+) + 2 hydrogen sulfide + 2 5'-deoxyadenosine + 2 L-methionine + 2 reduced [2Fe-2S]-[ferredoxin]. Its pathway is protein modification; protein lipoylation via endogenous pathway; protein N(6)-(lipoyl)lysine from octanoyl-[acyl-carrier-protein]: step 2/2. In terms of biological role, catalyzes the radical-mediated insertion of two sulfur atoms into the C-6 and C-8 positions of the octanoyl moiety bound to the lipoyl domains of lipoate-dependent enzymes, thereby converting the octanoylated domains into lipoylated derivatives. The chain is Lipoyl synthase from Methylocella silvestris (strain DSM 15510 / CIP 108128 / LMG 27833 / NCIMB 13906 / BL2).